The sequence spans 337 residues: Tetraacyldisaccharide 4'-kinase (337 aa).

51-58 contacts ATP; that stretch reads HLGGAGKT.

This sequence belongs to the LpxK family.

It carries out the reaction a lipid A disaccharide + ATP = a lipid IVA + ADP + H(+). Its pathway is glycolipid biosynthesis; lipid IV(A) biosynthesis; lipid IV(A) from (3R)-3-hydroxytetradecanoyl-[acyl-carrier-protein] and UDP-N-acetyl-alpha-D-glucosamine: step 6/6. In terms of biological role, transfers the gamma-phosphate of ATP to the 4'-position of a tetraacyldisaccharide 1-phosphate intermediate (termed DS-1-P) to form tetraacyldisaccharide 1,4'-bis-phosphate (lipid IVA). This chain is Tetraacyldisaccharide 4'-kinase, found in Nitrobacter winogradskyi (strain ATCC 25391 / DSM 10237 / CIP 104748 / NCIMB 11846 / Nb-255).